A 141-amino-acid chain; its full sequence is Large ribosomal subunit protein uL11 (141 aa).

This sequence belongs to the universal ribosomal protein uL11 family. As to quaternary structure, part of the ribosomal stalk of the 50S ribosomal subunit. Interacts with L10 and the large rRNA to form the base of the stalk. L10 forms an elongated spine to which L12 dimers bind in a sequential fashion forming a multimeric L10(L12)X complex. Post-translationally, one or more lysine residues are methylated.

Its function is as follows. Forms part of the ribosomal stalk which helps the ribosome interact with GTP-bound translation factors. The sequence is that of Large ribosomal subunit protein uL11 from Nostoc sp. (strain PCC 7120 / SAG 25.82 / UTEX 2576).